The sequence spans 267 residues: Protein BMH1 (267 aa).

Serine 2 is modified (N-acetylserine). Lysine 76 is covalently cross-linked (Glycyl lysine isopeptide (Lys-Gly) (interchain with G-Cter in ubiquitin)). Residue serine 89 is modified to Phosphoserine. The segment at 236 to 267 (DMSESGQAEDQQQQQQHQQQQPPAAAEGEAPK) is disordered. Low complexity predominate over residues 243-267 (AEDQQQQQQHQQQQPPAAAEGEAPK).

The protein belongs to the 14-3-3 family. Homodimer. Interacts with NTH1 (via N-terminus when phosphorylated by PKA); the interaction is direct and activates NTH1. Interacts with FIN1.

Its function is as follows. Involved in growth regulation. This is Protein BMH1 (BMH1) from Saccharomyces cerevisiae (strain ATCC 204508 / S288c) (Baker's yeast).